Here is an 825-residue protein sequence, read N- to C-terminus: Leucine-rich repeat and guanylate kinase domain-containing protein (825 aa).

The segment at 73 to 96 (DSDGDEDQGEGEAGSEESSESEML) is disordered. 9 LRR repeats span residues 129–149 (YLNL…CGYV), 150–171 (HLQK…SCMP), 172–193 (YLLE…KPPK), 194–215 (NLKK…SAYH), 216–237 (ALTK…EMCN), 238–259 (NLIH…NKLP), 260–280 (IKIL…EDLK), 281–302 (ALQN…ENHD), and 303–324 (LLEV…EYIK). One can recognise an LRRCT domain in the interval 337-375 (NPIQEKSEYWFFVIFMLLRLTELDQKKIKVEEKVSAVNK). Residues 414 to 597 (YPMLILAGPE…AYQKLSQLIR (184 aa)) enclose the Guanylate kinase-like domain. 421–428 (GPEACGKR) is an ATP binding site. A disordered region spans residues 760 to 825 (PEGSISSHLG…TLPPIPQGRR (66 aa)). Residues 763-774 (SISSHLGSGASD) show a composition bias toward polar residues. Residues 816–825 (TLPPIPQGRR) show a composition bias toward pro residues.

In terms of assembly, interacts (via guanylate kinase-like domain) with RIMBP3 (via coiled-coil region). Interacts (via guanylate kinase-like domain) with HOOK2. Interacts (via LRRCT domain) with KLC3. Interacts with HOOK1 and HOOK3.

Its subcellular location is the cytoplasmic vesicle. The protein resides in the secretory vesicle. It is found in the acrosome. It localises to the cytoplasm. The protein localises to the cytoskeleton. Its subcellular location is the cilium basal body. Its function is as follows. Involved in multiple aspects of sperm assembly including acrosome attachment, shaping of the sperm head and in the early aspects of axoneme development. Not essential for primary cilium biogenesis. This is Leucine-rich repeat and guanylate kinase domain-containing protein (LRGUK) from Homo sapiens (Human).